Here is a 128-residue protein sequence, read N- to C-terminus: Gene 64 protein (128 aa).

The sequence is that of Gene 64 protein (64) from Mycobacterium phage L5 (Mycobacteriophage L5).